We begin with the raw amino-acid sequence, 333 residues long: Ketol-acid reductoisomerase (NADP(+)) (333 aa).

Residues 2-182 (AELFYDADAD…GGTRAGVIKT (181 aa)) enclose the KARI N-terminal Rossmann domain. Residues 25 to 28 (YGSQ), Ser-51, Ser-53, and 83 to 86 (DPIQ) contribute to the NADP(+) site. His-108 is a catalytic residue. Gly-134 is an NADP(+) binding site. The KARI C-terminal knotted domain maps to 183–328 (TFTEETETDL…KELRKLMSWV (146 aa)). 4 residues coordinate Mg(2+): Asp-191, Glu-195, Glu-227, and Glu-231. Ser-252 contributes to the substrate binding site.

This sequence belongs to the ketol-acid reductoisomerase family. Mg(2+) serves as cofactor.

It catalyses the reaction (2R)-2,3-dihydroxy-3-methylbutanoate + NADP(+) = (2S)-2-acetolactate + NADPH + H(+). It carries out the reaction (2R,3R)-2,3-dihydroxy-3-methylpentanoate + NADP(+) = (S)-2-ethyl-2-hydroxy-3-oxobutanoate + NADPH + H(+). The protein operates within amino-acid biosynthesis; L-isoleucine biosynthesis; L-isoleucine from 2-oxobutanoate: step 2/4. It functions in the pathway amino-acid biosynthesis; L-valine biosynthesis; L-valine from pyruvate: step 2/4. In terms of biological role, involved in the biosynthesis of branched-chain amino acids (BCAA). Catalyzes an alkyl-migration followed by a ketol-acid reduction of (S)-2-acetolactate (S2AL) to yield (R)-2,3-dihydroxy-isovalerate. In the isomerase reaction, S2AL is rearranged via a Mg-dependent methyl migration to produce 3-hydroxy-3-methyl-2-ketobutyrate (HMKB). In the reductase reaction, this 2-ketoacid undergoes a metal-dependent reduction by NADPH to yield (R)-2,3-dihydroxy-isovalerate. In Streptomyces avermitilis (strain ATCC 31267 / DSM 46492 / JCM 5070 / NBRC 14893 / NCIMB 12804 / NRRL 8165 / MA-4680), this protein is Ketol-acid reductoisomerase (NADP(+)).